Consider the following 63-residue polypeptide: Large ribosomal subunit protein bL28 (63 aa).

Belongs to the bacterial ribosomal protein bL28 family.

The protein is Large ribosomal subunit protein bL28 of Geobacter sulfurreducens (strain ATCC 51573 / DSM 12127 / PCA).